Here is a 257-residue protein sequence, read N- to C-terminus: ECF RNA polymerase sigma factor SigE (257 aa).

The sigma-70 factor domain-2 stretch occupies residues 87–153 (MPSWDELVRQ…RITTNLFLDM (67 aa)). The Polymerase core binding motif lies at 111–114 (NQHD). The tract at residues 186–236 (SRLGADLQAALDSLPPEFRAAVVLCDIEGLSYEEIGATLGVKLGTVRSRIH) is sigma-70 factor domain-4. The H-T-H motif DNA-binding region spans 211-230 (DIEGLSYEEIGATLGVKLGT).

It belongs to the sigma-70 factor family. ECF subfamily. In terms of assembly, interacts transiently with the RNA polymerase catalytic core formed by RpoA, RpoB, RpoC and RpoZ (2 alpha, 1 beta, 1 beta' and 1 omega subunit) to form the RNA polymerase holoenzyme that can initiate transcription. Interacts (via sigma-70 factor domain 4) with RseA; interaction is abrogated by treatment of cells with H(2)O(2) or detergent.

Sigma factors are initiation factors that promote the attachment of RNA polymerase to specific initiation sites and are then released. Extracytoplasmic function (ECF) sigma factors are held in an inactive form by an anti-sigma factor until released. This Mycolicibacterium smegmatis (strain ATCC 700084 / mc(2)155) (Mycobacterium smegmatis) protein is ECF RNA polymerase sigma factor SigE (sigE).